Consider the following 177-residue polypeptide: Adenine phosphoribosyltransferase (177 aa).

Belongs to the purine/pyrimidine phosphoribosyltransferase family. As to quaternary structure, homodimer.

It localises to the cytoplasm. It carries out the reaction AMP + diphosphate = 5-phospho-alpha-D-ribose 1-diphosphate + adenine. The protein operates within purine metabolism; AMP biosynthesis via salvage pathway; AMP from adenine: step 1/1. Its function is as follows. Catalyzes a salvage reaction resulting in the formation of AMP, that is energically less costly than de novo synthesis. This chain is Adenine phosphoribosyltransferase, found in Chlorobium limicola (strain DSM 245 / NBRC 103803 / 6330).